The following is a 218-amino-acid chain: MVRRRGLSGLLEADIYGITAWEYSLGRSNIEVVAQMIEAGIKVIQYREKERPARQKYEECLKIREMTREAGVTFIVNDHVDLALLVDADGVHLGQDDLPADRVRELVGDKMIIGLSTHSPAQARAAEKMGVDYIGVGPIFATKTKKDVCDPVGLEYLEFVVKNISLPFVAIGGIKEHNIAEVSSRGAKCIALVTEIVGAEDIKAKVRALRAIISRKED.

Residues 45 to 49 and Asn77 contribute to the 4-amino-2-methyl-5-(diphosphooxymethyl)pyrimidine site; that span reads QYREK. Residues Asp78 and Asp97 each coordinate Mg(2+). Ser116 is a 4-amino-2-methyl-5-(diphosphooxymethyl)pyrimidine binding site. 142 to 144 contacts 2-[(2R,5Z)-2-carboxy-4-methylthiazol-5(2H)-ylidene]ethyl phosphate; sequence TKT. Position 145 (Lys145) interacts with 4-amino-2-methyl-5-(diphosphooxymethyl)pyrimidine. 2-[(2R,5Z)-2-carboxy-4-methylthiazol-5(2H)-ylidene]ethyl phosphate-binding positions include Gly173 and 193 to 194; that span reads VT.

Belongs to the thiamine-phosphate synthase family. Mg(2+) serves as cofactor.

It catalyses the reaction 2-[(2R,5Z)-2-carboxy-4-methylthiazol-5(2H)-ylidene]ethyl phosphate + 4-amino-2-methyl-5-(diphosphooxymethyl)pyrimidine + 2 H(+) = thiamine phosphate + CO2 + diphosphate. It carries out the reaction 2-(2-carboxy-4-methylthiazol-5-yl)ethyl phosphate + 4-amino-2-methyl-5-(diphosphooxymethyl)pyrimidine + 2 H(+) = thiamine phosphate + CO2 + diphosphate. The catalysed reaction is 4-methyl-5-(2-phosphooxyethyl)-thiazole + 4-amino-2-methyl-5-(diphosphooxymethyl)pyrimidine + H(+) = thiamine phosphate + diphosphate. It participates in cofactor biosynthesis; thiamine diphosphate biosynthesis; thiamine phosphate from 4-amino-2-methyl-5-diphosphomethylpyrimidine and 4-methyl-5-(2-phosphoethyl)-thiazole: step 1/1. Functionally, condenses 4-methyl-5-(beta-hydroxyethyl)thiazole monophosphate (THZ-P) and 2-methyl-4-amino-5-hydroxymethyl pyrimidine pyrophosphate (HMP-PP) to form thiamine monophosphate (TMP). The chain is Thiamine-phosphate synthase from Pelotomaculum thermopropionicum (strain DSM 13744 / JCM 10971 / SI).